A 270-amino-acid polypeptide reads, in one-letter code: Formamidopyrimidine-DNA glycosylase (270 aa).

The Schiff-base intermediate with DNA role is filled by Pro-2. The Proton donor role is filled by Glu-3. The active-site Proton donor; for beta-elimination activity is the Lys-56. Residues His-89, Arg-107, and Arg-151 each contribute to the DNA site. The FPG-type zinc finger occupies 236 to 270 (TVYGRAGEPCRVCATPIRLLRQGQRSTYYCPNCQK). Catalysis depends on Arg-260, which acts as the Proton donor; for delta-elimination activity.

This sequence belongs to the FPG family. As to quaternary structure, monomer. Zn(2+) is required as a cofactor.

It catalyses the reaction Hydrolysis of DNA containing ring-opened 7-methylguanine residues, releasing 2,6-diamino-4-hydroxy-5-(N-methyl)formamidopyrimidine.. The enzyme catalyses 2'-deoxyribonucleotide-(2'-deoxyribose 5'-phosphate)-2'-deoxyribonucleotide-DNA = a 3'-end 2'-deoxyribonucleotide-(2,3-dehydro-2,3-deoxyribose 5'-phosphate)-DNA + a 5'-end 5'-phospho-2'-deoxyribonucleoside-DNA + H(+). In terms of biological role, involved in base excision repair of DNA damaged by oxidation or by mutagenic agents. Acts as a DNA glycosylase that recognizes and removes damaged bases. Has a preference for oxidized purines, such as 7,8-dihydro-8-oxoguanine (8-oxoG). Has AP (apurinic/apyrimidinic) lyase activity and introduces nicks in the DNA strand. Cleaves the DNA backbone by beta-delta elimination to generate a single-strand break at the site of the removed base with both 3'- and 5'-phosphates. In Variovorax paradoxus (strain S110), this protein is Formamidopyrimidine-DNA glycosylase.